A 478-amino-acid polypeptide reads, in one-letter code: Cytochrome c-552 (478 aa).

Positions 1–27 are cleaved as a signal peptide; sequence MKKQWTRRSAAAIAMVTTLLLSSHSFA. A heme c-binding site is contributed by histidine 91. 3 residues coordinate heme: cysteine 119, cysteine 122, and lysine 123. 6 residues coordinate heme c: cysteine 157, cysteine 160, histidine 161, cysteine 206, cysteine 209, and histidine 210. Positions 212, 213, 258, and 260 each coordinate Ca(2+). Substrate is bound at residue tyrosine 213. Histidine 261 serves as a coordination point for substrate. Heme c-binding residues include histidine 272, cysteine 279, cysteine 282, histidine 283, histidine 298, cysteine 311, cysteine 314, histidine 315, and histidine 390.

The protein belongs to the cytochrome c-552 family. It depends on Ca(2+) as a cofactor. Heme c serves as cofactor.

The protein localises to the periplasm. The catalysed reaction is 6 Fe(III)-[cytochrome c] + NH4(+) + 2 H2O = 6 Fe(II)-[cytochrome c] + nitrite + 8 H(+). It participates in nitrogen metabolism; nitrate reduction (assimilation). Catalyzes the reduction of nitrite to ammonia, consuming six electrons in the process. The polypeptide is Cytochrome c-552 (Aliivibrio fischeri (strain ATCC 700601 / ES114) (Vibrio fischeri)).